The sequence spans 193 residues: Small ribosomal subunit protein uS7 (193 aa).

Belongs to the universal ribosomal protein uS7 family. In terms of assembly, part of the 30S ribosomal subunit.

Its function is as follows. One of the primary rRNA binding proteins, it binds directly to 16S rRNA where it nucleates assembly of the head domain of the 30S subunit. Is located at the subunit interface close to the decoding center. This Saccharolobus solfataricus (strain ATCC 35092 / DSM 1617 / JCM 11322 / P2) (Sulfolobus solfataricus) protein is Small ribosomal subunit protein uS7.